The sequence spans 328 residues: Carbonic anhydrase-related protein 11 (328 aa).

The signal sequence occupies residues 1-23; the sequence is MGAAARLSAPRALVLWAALGAAA. The Alpha-carbonic anhydrase domain maps to 33 to 303; that stretch reads DWWSYKDNLQ…LAHRALRGNR (271 aa). Asparagine 118, asparagine 170, and asparagine 260 each carry an N-linked (GlcNAc...) asparagine glycan. The interval 299 to 328 is disordered; the sequence is LRGNRDPRHPERRCRGPNYRLHVDGVPHGR. A compositionally biased stretch (basic and acidic residues) spans 319–328; sequence LHVDGVPHGR.

It belongs to the alpha-carbonic anhydrase family. As to expression, expressed abundantly in the brain with moderate expression also present in spinal cord and thyroid.

It localises to the secreted. Functionally, does not have a catalytic activity. In Homo sapiens (Human), this protein is Carbonic anhydrase-related protein 11 (CA11).